The sequence spans 157 residues: Phosphopantetheine adenylyltransferase (157 aa).

Residue Thr10 participates in substrate binding. ATP-binding positions include 10 to 11 (TF) and His18. Substrate is bound by residues Lys42, Leu74, and Arg88. ATP contacts are provided by residues 89 to 91 (GLR), Glu99, and 124 to 130 (NAFISSS).

Belongs to the bacterial CoaD family. As to quaternary structure, homohexamer. Mg(2+) serves as cofactor.

The protein resides in the cytoplasm. The catalysed reaction is (R)-4'-phosphopantetheine + ATP + H(+) = 3'-dephospho-CoA + diphosphate. Its pathway is cofactor biosynthesis; coenzyme A biosynthesis; CoA from (R)-pantothenate: step 4/5. In terms of biological role, reversibly transfers an adenylyl group from ATP to 4'-phosphopantetheine, yielding dephospho-CoA (dPCoA) and pyrophosphate. The sequence is that of Phosphopantetheine adenylyltransferase from Helicobacter pylori (strain Shi470).